The sequence spans 133 residues: Small ribosomal subunit protein uS8 (133 aa).

It belongs to the universal ribosomal protein uS8 family. As to quaternary structure, part of the 30S ribosomal subunit. Contacts proteins S5 and S12.

Functionally, one of the primary rRNA binding proteins, it binds directly to 16S rRNA central domain where it helps coordinate assembly of the platform of the 30S subunit. This is Small ribosomal subunit protein uS8 from Crocosphaera subtropica (strain ATCC 51142 / BH68) (Cyanothece sp. (strain ATCC 51142)).